The primary structure comprises 497 residues: Carboxylesterase (497 aa).

Catalysis depends on Ser-185, which acts as the Acyl-ester intermediate. Catalysis depends on charge relay system residues Glu-319 and His-415.

It belongs to the type-B carboxylesterase/lipase family.

It is found in the secreted. The catalysed reaction is a carboxylic ester + H2O = an alcohol + a carboxylate + H(+). This is Carboxylesterase from Thermobifida fusca (Thermomonospora fusca).